Reading from the N-terminus, the 499-residue chain is Potassium voltage-gated channel subfamily A member 2 (499 aa).

Residues 1–26 (MTVATGDPVDEAAALPGHPQDTYDPE) form a disordered region. The segment at 1–125 (MTVATGDPVD…YELGEEAMEM (125 aa)) is tetramerization domain. Residues 1–160 (MTVATGDPVD…LLFEYPESSG (160 aa)) lie on the Cytoplasmic side of the membrane. Residues 161–182 (PARIIAIVSVMVILISIVSFCL) form a helical membrane-spanning segment. The Extracellular segment spans residues 183–221 (ETLPIFRDENEDMHGGGVTFHTYSNSTIGYQQSTSFTDP). N207 carries N-linked (GlcNAc...) asparagine glycosylation. The chain crosses the membrane as a helical span at residues 222-243 (FFIVETLCIIWFSFEFLVRFFA). Residue C244 is the site of S-palmitoyl cysteine attachment. Residues 244–254 (CPSKAGFFTNI) lie on the Cytoplasmic side of the membrane. The chain crosses the membrane as a helical span at residues 255-275 (MNIIDIVAIIPYFITLGTELA). Residues 276 to 289 (EKPEDAQQGQQAMS) lie on the Extracellular side of the membrane. A helical; Voltage-sensor transmembrane segment spans residues 290 to 310 (LAILRVIRLVRVFRIFKLSRH). Over 311–325 (SKGLQILGQTLKASM) the chain is Cytoplasmic. Residues 312-325 (KGLQILGQTLKASM) are S4-S5 linker. Residues 326-347 (RELGLLIFFLFIGVILFSSAVY) form a helical membrane-spanning segment. The Extracellular portion of the chain corresponds to 348–361 (FAEADERDSQFPSI). The helical intramembrane region spans 362–373 (PDAFWWAVVSMT). The short motif at 374–379 (TVGYGD) is the Selectivity filter element. An intramembrane segment occupies 374-381 (TVGYGDMV). The Extracellular portion of the chain corresponds to 382-388 (PTTIGGK). A helical membrane pass occupies residues 389–417 (IVGSLCAIAGVLTIALPVPVIVSNFNYFY). The Cytoplasmic portion of the chain corresponds to 418 to 499 (HRETEGEEQA…VNITKMLTDV (82 aa)). Position 429 is a phosphotyrosine (Y429). Phosphoserine is present on residues S434, S440, S441, and S449. The residue at position 458 (Y458) is a Phosphotyrosine. Position 468 is a phosphoserine (S468). A PDZ-binding motif is present at residues 497 to 499 (TDV).

It belongs to the potassium channel family. A (Shaker) (TC 1.A.1.2) subfamily. Kv1.2/KCNA2 sub-subfamily. As to quaternary structure, homotetramer and heterotetramer with other channel-forming alpha subunits, such as KCNA1, KCNA4, KCNA5, KCNA6 and KCNA7. Channel activity is regulated by interaction with beta subunits, including KCNAB1 and KCNAB2. Identified in a complex with KCNA1 and KCNAB2. Identified in a complex with KCNA5 and KCNAB1. Identified in a complex with KCNA4 and FYN. Interacts with PTK2B. Interacts (via C-terminus) with CTTN. Interacts with ADAM22. Interacts with CNTNAP2. Interacts (via C-terminus) with the PDZ domains of DLG1, DLG2 and DLG4. Interacts (via N-terminal cytoplasmic domain) with RHOA (GTP-bound form); this regulates channel activity by reducing location at the cell surface in response to CHRM1 activation. Interacts with DRD2. Interacts with SIGMAR1; cocaine consumption leads to increased interaction. Interacts with ADAM11. Interacts with LYNX1. In terms of processing, phosphorylated on tyrosine residues; phosphorylation increases in response to ischemia. Phosphorylated on tyrosine residues by activated PTK2B/PYK2. Phosphorylation on tyrosine residues suppresses ion channel activity. Phosphorylated on tyrosine residues in response to CHRM1 activation; this abolishes interaction with CTTN. This is probably due to endocytosis of the phosphorylated channel subunits. Phosphorylated on serine residues in response to increased cAMP levels; phosphorylation is apparently not catalyzed by PKA. Post-translationally, N-glycosylated, with complex, sialylated N-glycans. In terms of tissue distribution, detected in brain. Detected in cerebellum. Detected in mitral cells in the olfactory bulb. Detected in cochlea. Detected in cerebellum, particularly in the basket cell axon plexus and in the terminal regions around Purkinje cells (at protein level). Detected in juxtaparanodal regions in sciatic nerve. Detected in Schwann cells from sciatic nerve. Detected in dopamine neurons in substantia nigra. Detected in large myelinated fibers in juxtaparanodes in the CA3 and CA1 areas of the hippocampus. Detected in brain, in punctae on fiber tracts in brain stem and spinal cord, and on axons in the juxtaparanodal regions of the node of Ranvier (at protein level). Detected in dopamine neurons in the midbrain.

It is found in the cell membrane. Its subcellular location is the membrane. The protein resides in the cell projection. The protein localises to the axon. It localises to the synapse. It is found in the endoplasmic reticulum membrane. Its subcellular location is the lamellipodium membrane. The protein resides in the synaptosome. The protein localises to the presynaptic cell membrane. It localises to the dendrite. It is found in the perikaryon. Its subcellular location is the cell junction. The protein resides in the paranodal septate junction. The enzyme catalyses K(+)(in) = K(+)(out). With respect to regulation, inhibited by 4-aminopyridine (4-AP), dendrotoxin (DTX) and charybdotoxin (CTX), but not by tetraethylammonium (TEA). Inhibited by tityustoxin-K alpha (TsTX-Kalpha), a toxin that is highly specific for KCNA2. Inhibited by maurotoxin. Inhibited by kappaM conotoxins kappaM-RIIIJ and kappaM-RIIIK. Its function is as follows. Voltage-gated potassium channel that mediates transmembrane potassium transport in excitable membranes, primarily in the brain and the central nervous system, but also in the cardiovascular system. Prevents aberrant action potential firing and regulates neuronal output. Forms tetrameric potassium-selective channels through which potassium ions pass in accordance with their electrochemical gradient. The channel alternates between opened and closed conformations in response to the voltage difference across the membrane. Can form functional homotetrameric channels and heterotetrameric channels that contain variable proportions of KCNA1, KCNA2, KCNA4, KCNA5, KCNA6, KCNA7, and possibly other family members as well; channel properties depend on the type of alpha subunits that are part of the channel. Channel properties are modulated by cytoplasmic beta subunits that regulate the subcellular location of the alpha subunits and promote rapid inactivation of delayed rectifier potassium channels. In vivo, membranes probably contain a mixture of heteromeric potassium channel complexes, making it difficult to assign currents observed in intact tissues to any particular potassium channel family member. Homotetrameric KCNA2 forms a delayed-rectifier potassium channel that opens in response to membrane depolarization, followed by slow spontaneous channel closure. In contrast, a heteromultimer formed by KCNA2 and KCNA4 shows rapid inactivation. Contributes to the regulation of action potentials in neurons. KCNA2-containing channels play a presynaptic role and prevent hyperexcitability and aberrant action potential firing. Response to toxins that are selective for KCNA1, respectively for KCNA2, suggests that heteromeric potassium channels composed of both KCNA1 and KCNA2 play a role in pacemaking and regulate the output of deep cerebellar nuclear neurons. Response to toxins that are selective for KCNA2-containing potassium channels suggests that in Purkinje cells, dendritic subthreshold KCNA2-containing potassium channels prevent random spontaneous calcium spikes, suppressing dendritic hyperexcitability without hindering the generation of somatic action potentials, and thereby play an important role in motor coordination. KCNA2-containing channels play a role in GABAergic transmission from basket cells to Purkinje cells in the cerebellum, and thereby play an import role in motor coordination. Plays a role in the induction of long-term potentiation of neuron excitability in the CA3 layer of the hippocampus. May function as down-stream effector for G protein-coupled receptors and inhibit GABAergic inputs to basolateral amygdala neurons. May contribute to the regulation of neurotransmitter release, such as gamma-aminobutyric acid (GABA). Contributes to the regulation of the axonal release of the neurotransmitter dopamine. Reduced KCNA2 expression plays a role in the perception of neuropathic pain after peripheral nerve injury, but not acute pain. Plays a role in the regulation of the time spent in non-rapid eye movement (NREM) sleep. This chain is Potassium voltage-gated channel subfamily A member 2 (Kcna2), found in Mus musculus (Mouse).